The chain runs to 197 residues: 5'-deoxynucleotidase YpsIP31758_1449 (197 aa).

Substrate-binding positions include 16–17 and His31; that span reads RW. One can recognise an HD domain in the interval 28-140; that stretch reads VSEHSLQVAF…VKQADALCAY (113 aa). A divalent metal cation-binding residues include His31, His66, and Asp67. Substrate contacts are provided by residues Asp67, 75–78, and Asp135; that span reads DLPT. Residue Asp135 coordinates a divalent metal cation.

This sequence belongs to the 5DNU family. As to quaternary structure, homodimer. Requires a divalent metal cation as cofactor.

Its subcellular location is the cytoplasm. It catalyses the reaction a 2'-deoxyribonucleoside 5'-phosphate + H2O = a 2'-deoxyribonucleoside + phosphate. In terms of biological role, catalyzes the strictly specific dephosphorylation of 2'-deoxyribonucleoside 5'-monophosphates. In Yersinia pseudotuberculosis serotype O:1b (strain IP 31758), this protein is 5'-deoxynucleotidase YpsIP31758_1449.